We begin with the raw amino-acid sequence, 232 residues long: Enolase-phosphatase E1 (232 aa).

Belongs to the HAD-like hydrolase superfamily. MasA/MtnC family. In terms of assembly, monomer. Requires Mg(2+) as cofactor.

It catalyses the reaction 5-methylsulfanyl-2,3-dioxopentyl phosphate + H2O = 1,2-dihydroxy-5-(methylsulfanyl)pent-1-en-3-one + phosphate. It functions in the pathway amino-acid biosynthesis; L-methionine biosynthesis via salvage pathway; L-methionine from S-methyl-5-thio-alpha-D-ribose 1-phosphate: step 3/6. The protein operates within amino-acid biosynthesis; L-methionine biosynthesis via salvage pathway; L-methionine from S-methyl-5-thio-alpha-D-ribose 1-phosphate: step 4/6. In terms of biological role, bifunctional enzyme that catalyzes the enolization of 2,3-diketo-5-methylthiopentyl-1-phosphate (DK-MTP-1-P) into the intermediate 2-hydroxy-3-keto-5-methylthiopentenyl-1-phosphate (HK-MTPenyl-1-P), which is then dephosphorylated to form the acireductone 1,2-dihydroxy-3-keto-5-methylthiopentene (DHK-MTPene). The chain is Enolase-phosphatase E1 from Xylella fastidiosa (strain Temecula1 / ATCC 700964).